The following is a 457-amino-acid chain: Argininosuccinate lyase (457 aa).

The protein belongs to the lyase 1 family. Argininosuccinate lyase subfamily.

It localises to the cytoplasm. The catalysed reaction is 2-(N(omega)-L-arginino)succinate = fumarate + L-arginine. It functions in the pathway amino-acid biosynthesis; L-arginine biosynthesis; L-arginine from L-ornithine and carbamoyl phosphate: step 3/3. The protein is Argininosuccinate lyase of Haemophilus influenzae (strain ATCC 51907 / DSM 11121 / KW20 / Rd).